The chain runs to 194 residues: Adenylate kinase (194 aa).

Residue 11 to 16 (GSGKGT) participates in ATP binding. The segment at 31 to 60 (STGELLRAEIKAQTELGQAAAGYINEGHLV) is NMP. Residues threonine 32, arginine 37, 58-60 (HLV), 86-89 (GFPR), and glutamine 93 each bind AMP. The tract at residues 127-137 (NRGKISGRSDD) is LID. Arginine 128 is a binding site for ATP. Arginine 134 and arginine 145 together coordinate AMP. Glycine 173 lines the ATP pocket.

The protein belongs to the adenylate kinase family. In terms of assembly, monomer.

Its subcellular location is the cytoplasm. It catalyses the reaction AMP + ATP = 2 ADP. It functions in the pathway purine metabolism; AMP biosynthesis via salvage pathway; AMP from ADP: step 1/1. In terms of biological role, catalyzes the reversible transfer of the terminal phosphate group between ATP and AMP. Plays an important role in cellular energy homeostasis and in adenine nucleotide metabolism. This is Adenylate kinase from Porphyromonas gingivalis (strain ATCC 33277 / DSM 20709 / CIP 103683 / JCM 12257 / NCTC 11834 / 2561).